A 643-amino-acid chain; its full sequence is Threonine--tRNA ligase (643 aa).

In terms of domain architecture, TGS spans 1 to 62; the sequence is MSFSVTLPDG…DEDVEAAIIT (62 aa). Residues 239–537 form a catalytic region; sequence DHRTIGRDLD…LTEIYKGAFP (299 aa). Zn(2+) is bound by residues C333, H384, and H514.

The protein belongs to the class-II aminoacyl-tRNA synthetase family. Homodimer. Zn(2+) serves as cofactor.

It is found in the cytoplasm. It catalyses the reaction tRNA(Thr) + L-threonine + ATP = L-threonyl-tRNA(Thr) + AMP + diphosphate + H(+). Catalyzes the attachment of threonine to tRNA(Thr) in a two-step reaction: L-threonine is first activated by ATP to form Thr-AMP and then transferred to the acceptor end of tRNA(Thr). Also edits incorrectly charged L-seryl-tRNA(Thr). The chain is Threonine--tRNA ligase from Lactobacillus gasseri (strain ATCC 33323 / DSM 20243 / BCRC 14619 / CIP 102991 / JCM 1131 / KCTC 3163 / NCIMB 11718 / NCTC 13722 / AM63).